A 160-amino-acid chain; its full sequence is Small ribosomal subunit protein bS16 (160 aa).

Residues 115–139 (GGPTTEATRPKKKVSAKKAAKAVES) are disordered. The segment covering 124–134 (PKKKVSAKKAA) has biased composition (basic residues).

It belongs to the bacterial ribosomal protein bS16 family.

The chain is Small ribosomal subunit protein bS16 from Mycobacterium leprae (strain Br4923).